The sequence spans 234 residues: Large ribosomal subunit protein uL1 (234 aa).

The protein belongs to the universal ribosomal protein uL1 family. As to quaternary structure, part of the 50S ribosomal subunit.

Its function is as follows. Binds directly to 23S rRNA. The L1 stalk is quite mobile in the ribosome, and is involved in E site tRNA release. Protein L1 is also a translational repressor protein, it controls the translation of the L11 operon by binding to its mRNA. The chain is Large ribosomal subunit protein uL1 from Desulfosudis oleivorans (strain DSM 6200 / JCM 39069 / Hxd3) (Desulfococcus oleovorans).